The following is a 163-amino-acid chain: Transcriptional repressor NrdR (163 aa).

A zinc finger spans residues Cys-3–Cys-34. The region spanning Pro-49 to Ala-139 is the ATP-cone domain.

The protein belongs to the NrdR family. The cofactor is Zn(2+).

Negatively regulates transcription of bacterial ribonucleotide reductase nrd genes and operons by binding to NrdR-boxes. This Acidithiobacillus ferrooxidans (strain ATCC 23270 / DSM 14882 / CIP 104768 / NCIMB 8455) (Ferrobacillus ferrooxidans (strain ATCC 23270)) protein is Transcriptional repressor NrdR.